The chain runs to 1297 residues: Phosphoribosylformylglycinamidine synthase (1297 aa).

The segment at 305–324 (FPGAATGSGGEIRDEGATGR) is disordered. 307–318 (GAATGSGGEIRD) contacts ATP. Residues Asp679, Glu718, Asn722, and Asp886 each coordinate Mg(2+). Ser888 contributes to the ATP binding site. The Glutamine amidotransferase type-1 domain occupies 1044–1297 (IAVLREQGVN…LFRNARVFFK (254 aa)). Cys1137 functions as the Nucleophile in the catalytic mechanism. Active-site residues include His1262 and Glu1264.

In the N-terminal section; belongs to the FGAMS family. As to quaternary structure, monomer.

It is found in the cytoplasm. It catalyses the reaction N(2)-formyl-N(1)-(5-phospho-beta-D-ribosyl)glycinamide + L-glutamine + ATP + H2O = 2-formamido-N(1)-(5-O-phospho-beta-D-ribosyl)acetamidine + L-glutamate + ADP + phosphate + H(+). It functions in the pathway purine metabolism; IMP biosynthesis via de novo pathway; 5-amino-1-(5-phospho-D-ribosyl)imidazole from N(2)-formyl-N(1)-(5-phospho-D-ribosyl)glycinamide: step 1/2. Functionally, phosphoribosylformylglycinamidine synthase involved in the purines biosynthetic pathway. Catalyzes the ATP-dependent conversion of formylglycinamide ribonucleotide (FGAR) and glutamine to yield formylglycinamidine ribonucleotide (FGAM) and glutamate. This chain is Phosphoribosylformylglycinamidine synthase, found in Mannheimia succiniciproducens (strain KCTC 0769BP / MBEL55E).